The following is a 518-amino-acid chain: Ankyrin repeat and SOCS box protein 3 (518 aa).

ANK repeat units follow at residues 9 to 38 (DTCS…SVDV), 42 to 71 (RGWM…SENY), 78 to 107 (EGFC…DPNA), 111 to 140 (EETT…NVNG), 145 to 174 (CGWN…NKEC), 178 to 207 (FGIT…NVNC), 211 to 240 (DKAT…DPDL), 246 to 275 (SWQL…RACD), 279 to 308 (NKVS…SPDA), 315 to 346 (GFSS…QINE), and 348 to 373 (HLAY…SLGP). An SOCS box domain is found at 441 to 504 (MLSARASNAW…HNYLLYEDVL (64 aa)).

It belongs to the ankyrin SOCS box (ASB) family. In terms of assembly, interacts with ELOB and TNFRSF1B.

Its subcellular location is the cytoplasm. It participates in protein modification; protein ubiquitination. Probable substrate-recognition component of a SCF-like ECS (Elongin-Cullin-SOCS-box protein) E3 ubiquitin-protein ligase complex which mediates the ubiquitination and subsequent proteasomal degradation of target proteins. Recognizes TNFRSF1B. Plays a role in the down-regulation of antiviral innate immunity by targeting MAVS for ubiquitin-proteasomal degradation. Also destabilizes TRAF6 by enhancing its 'Lys-48'-linked polyubiquitination. This chain is Ankyrin repeat and SOCS box protein 3 (ASB3), found in Homo sapiens (Human).